A 355-amino-acid polypeptide reads, in one-letter code: C-X-C chemokine receptor type 1 (355 aa).

The Extracellular segment spans residues 1 to 40 (MEVNVWNMTDLWTWFEDEFANATGMPPVEKDYSPCLVVTQ). Asn-7 and Asn-21 each carry an N-linked (GlcNAc...) asparagine glycan. Residues 41 to 67 (TLNKYVVVVIYALVFLLSLLGNSLVML) form a helical membrane-spanning segment. The Cytoplasmic segment spans residues 68 to 73 (VILYSR). Residues 74-92 (SNRSVTDVYLLNLAMADLL) form a helical membrane-spanning segment. Over 93–114 (FALTMPIWAVSKEKGWIFGTPL) the chain is Extracellular. A helical transmembrane segment spans residues 115–138 (CKVVSLVKEVNFYSGILLLACISV). Residues Cys-115 and Cys-192 are joined by a disulfide bond. The Cytoplasmic segment spans residues 139–159 (DRYLAIVHATRTLTQKRHLVK). A helical membrane pass occupies residues 160–184 (FICLGIWALSLILSLPFFLFRQVFS). Topologically, residues 185-204 (PNNSSPVCYEDLGHNTAKWR) are extracellular. The helical transmembrane segment at 205–232 (MVLRILPHTFGFILPLLVMLFCYGFTLR) threads the bilayer. The Cytoplasmic segment spans residues 233–247 (TLFQAHMGQKHRAMR). Residues 248–270 (VIFAVVLIFLLCWLPYNLVLLAD) traverse the membrane as a helical segment. At 271–290 (TLMRTHVIQETCQRRNDIDR) the chain is on the extracellular side. A helical transmembrane segment spans residues 291–313 (ALDATEILGFLHSCLNPIIYAFI). Residues 314-355 (GQNFRNGFLKMLAARGLISKEFLTRHRVTSYTSSSTNVPSNL) lie on the Cytoplasmic side of the membrane.

Belongs to the G-protein coupled receptor 1 family. In terms of assembly, interacts with IL8. Interacts with GNAI2. As to expression, neutrophils.

The protein resides in the cell membrane. Receptor to interleukin-8, which is a powerful neutrophils chemotactic factor. Binding of IL-8 to the receptor causes activation of neutrophils. This response is mediated via a G-protein that activates a phosphatidylinositol-calcium second messenger system. The protein is C-X-C chemokine receptor type 1 (CXCR1) of Oryctolagus cuniculus (Rabbit).